The primary structure comprises 239 residues: AA9 family lytic polysaccharide monooxygenase C (239 aa).

His-1 lines the Cu(2+) pocket. A disulfide bond links Cys-39 and Cys-190. Asn-75 is a glycosylation site (N-linked (GlcNAc...) asparagine). His-84 serves as a coordination point for Cu(2+). Asn-135 carries N-linked (GlcNAc...) asparagine glycosylation. His-157 and Gln-166 together coordinate O2. Tyr-168 lines the Cu(2+) pocket. N-linked (GlcNAc...) asparagine glycosylation is found at Asn-194 and Asn-229.

This sequence belongs to the polysaccharide monooxygenase AA9 family. The cofactor is Cu(2+).

The protein resides in the secreted. It carries out the reaction [(1-&gt;4)-beta-D-glucosyl]n+m + reduced acceptor + O2 = 4-dehydro-beta-D-glucosyl-[(1-&gt;4)-beta-D-glucosyl]n-1 + [(1-&gt;4)-beta-D-glucosyl]m + acceptor + H2O.. Functionally, lytic polysaccharide monooxygenase (LPMO) that depolymerizes crystalline and amorphous polysaccharides via the oxidation of scissile alpha- or beta-(1-4)-glycosidic bonds, yielding C1 or C4 oxidation products. Catalysis by LPMOs requires the reduction of the active-site copper from Cu(II) to Cu(I) by a reducing agent and H(2)O(2) or O(2) as a cosubstrate. This chain is AA9 family lytic polysaccharide monooxygenase C, found in Gloeophyllum trabeum (Brown rot fungus).